Consider the following 375-residue polypeptide: Hydrogenase-1 small chain (375 aa).

The segment at residues 1–47 is a signal peptide (tat-type signal); the sequence is MNTNNEETFYQAMRRKGVSRRSFLKYCSLAATSLGLGAAMTPRIAWA. Cys64, Cys67, Cys162, Cys196, His234, Cys237, Cys262, and Cys268 together coordinate [4Fe-4S] cluster. Residues Cys277, Cys296, and Cys299 each coordinate [3Fe-4S] cluster. Residues 353-375 are disordered; that stretch reads HNRHKQQLADAGQQSPDNEDKQA.

The protein belongs to the [NiFe]/[NiFeSe] hydrogenase small subunit family. Heterodimer of a large and a small subunit. It depends on [4Fe-4S] cluster as a cofactor. The cofactor is [3Fe-4S] cluster. Predicted to be exported by the Tat system. The position of the signal peptide cleavage has not been experimentally proven.

The protein localises to the cell membrane. It carries out the reaction H2 + A = AH2. The sequence is that of Hydrogenase-1 small chain (hyaA) from Citrobacter freundii.